The sequence spans 501 residues: Cytochrome P450 2J5 (501 aa).

Residue Cys447 coordinates heme.

Belongs to the cytochrome P450 family. The cofactor is heme.

The protein localises to the endoplasmic reticulum membrane. It localises to the microsome membrane. It carries out the reaction an organic molecule + reduced [NADPH--hemoprotein reductase] + O2 = an alcohol + oxidized [NADPH--hemoprotein reductase] + H2O + H(+). The polypeptide is Cytochrome P450 2J5 (Cyp2j5) (Mus musculus (Mouse)).